A 545-amino-acid chain; its full sequence is Membrane protein insertase YidC (545 aa).

Residues 6-26 (LILFSALVLVLFLMWDAWQTD) traverse the membrane as a helical segment. Residues 34–59 (PPPPQPTASSGESSPVLPEAVPDAPP) are disordered. 3 helical membrane-spanning segments follow: residues 357–377 (LVGN…LVFF), 428–448 (GGCL…WMLL), and 505–525 (PVMF…YWVV).

It belongs to the OXA1/ALB3/YidC family. Type 1 subfamily. Interacts with the Sec translocase complex via SecD. Specifically interacts with transmembrane segments of nascent integral membrane proteins during membrane integration.

It localises to the cell inner membrane. Functionally, required for the insertion and/or proper folding and/or complex formation of integral membrane proteins into the membrane. Involved in integration of membrane proteins that insert both dependently and independently of the Sec translocase complex, as well as at least some lipoproteins. Aids folding of multispanning membrane proteins. The sequence is that of Membrane protein insertase YidC from Nitrosococcus oceani (strain ATCC 19707 / BCRC 17464 / JCM 30415 / NCIMB 11848 / C-107).